Here is a 428-residue protein sequence, read N- to C-terminus: MTLGWLQIFRLGLVQLCIGAVVVLTTSTLNRLMVVELALPAVLPGALVALHYGLQIARPAWGLRSDTKGNRTFFVILGMAVLALGAFLAAVAVVLFPLAWGQALLLSVFAYVLIGFGVGASGTSLLALLASATEPRRRAAAATITWLLMIFGIAVTAGTVGHFLDPYSPERLLWIVAIVTLGAVVLTTLAVWGIERRLDHPVPEDTPPRLLEGLREVWAEPQARAFTFFLFLSMTAYFLQELILEPYAGLVFGFTAGETTKLSGMQNGGVFFGMLTVGLALSGLKIGSLRGWVVTGCLGSSLALMAIVALGHLPGAALVPAVIGLGFFNGIFAVAAIGAMMALAGEGRSSREGTRMGLWGAAQAIAAGFGGLVGAGAADLMRLFLPDATAFGLVFGAQALLFIVAAMMATGVVAARGAARVPTVMAGE.

12 helical membrane passes run 3-23 (LGWL…AVVV), 32-52 (LMVV…ALHY), 73-93 (FFVI…AVAV), 115-135 (GFGV…ATEP), 144-164 (ITWL…GHFL), 172-192 (LLWI…LAVW), 225-245 (AFTF…LILE), 269-289 (GVFF…IGSL), 291-311 (GWVV…VALG), 317-337 (ALVP…VAAI), 358-378 (LWGA…AGAA), and 393-413 (LVFG…TGVV).

Belongs to the PucC family.

It is found in the membrane. Its pathway is porphyrin-containing compound metabolism; bacteriochlorophyll biosynthesis (light-independent). This Rhodobacter capsulatus (strain ATCC BAA-309 / NBRC 16581 / SB1003) protein is Bacteriochlorophyll synthase 44.5 kDa chain.